The primary structure comprises 464 residues: tRNA(Ile)-lysidine synthase (464 aa).

Residue serine 26–serine 31 coordinates ATP.

This sequence belongs to the tRNA(Ile)-lysidine synthase family.

It is found in the cytoplasm. The enzyme catalyses cytidine(34) in tRNA(Ile2) + L-lysine + ATP = lysidine(34) in tRNA(Ile2) + AMP + diphosphate + H(+). In terms of biological role, ligates lysine onto the cytidine present at position 34 of the AUA codon-specific tRNA(Ile) that contains the anticodon CAU, in an ATP-dependent manner. Cytidine is converted to lysidine, thus changing the amino acid specificity of the tRNA from methionine to isoleucine. The protein is tRNA(Ile)-lysidine synthase of Geobacillus kaustophilus (strain HTA426).